The primary structure comprises 559 residues: Glucose-6-phosphate isomerase (559 aa).

Glu-363 acts as the Proton donor in catalysis. Residues His-394 and Lys-523 contribute to the active site.

The protein belongs to the GPI family.

It localises to the cytoplasm. The enzyme catalyses alpha-D-glucose 6-phosphate = beta-D-fructose 6-phosphate. It functions in the pathway carbohydrate biosynthesis; gluconeogenesis. The protein operates within carbohydrate degradation; glycolysis; D-glyceraldehyde 3-phosphate and glycerone phosphate from D-glucose: step 2/4. Functionally, catalyzes the reversible isomerization of glucose-6-phosphate to fructose-6-phosphate. This Bartonella quintana (strain Toulouse) (Rochalimaea quintana) protein is Glucose-6-phosphate isomerase.